Reading from the N-terminus, the 244-residue chain is Transcriptional activator protein PhzR (244 aa).

One can recognise an HTH luxR-type domain in the interval 177 to 242 (AFNTDVEFSE…QAVSYAVALG (66 aa)). Residues 201–220 (SEEIGVIMGVCTDTVNYHHR) constitute a DNA-binding region (H-T-H motif).

This sequence belongs to the autoinducer-regulated transcriptional regulatory protein family.

Functionally, positive regulator of phenazine antibiotic production. May activate the phenazine biosynthetic genes by binding to a DNA sequence upstream of them, or to an intermediate gene which, in turn, interacts with them. The chain is Transcriptional activator protein PhzR (phzR) from Pseudomonas fluorescens.